Consider the following 59-residue polypeptide: Large ribosomal subunit protein uL30 (59 aa).

It belongs to the universal ribosomal protein uL30 family. In terms of assembly, part of the 50S ribosomal subunit.

The polypeptide is Large ribosomal subunit protein uL30 (Pectobacterium atrosepticum (strain SCRI 1043 / ATCC BAA-672) (Erwinia carotovora subsp. atroseptica)).